Here is a 300-residue protein sequence, read N- to C-terminus: Cation-efflux pump FieF (300 aa).

Transmembrane regions (helical) follow at residues 12–32 (AAIAATAMASLLLLIKIFAWW), 39–59 (ILAALVDSLVDIGASLTNLLV), 82–102 (AALAQSMFISGSALFLFLTGI), and 114–134 (PGVGVIVTIVALICTIILVSF). Residues D45 and D49 each contribute to the Zn(2+) site. The Zn(2+) site is built by H153 and D157. Helical transmembrane passes span 156–176 (SDVMMNGAILLALGLSWYGWH) and 178–198 (ADALFALGIGIYILYSALRMG).

It belongs to the cation diffusion facilitator (CDF) transporter (TC 2.A.4) family. FieF subfamily. In terms of assembly, homodimer.

The protein localises to the cell inner membrane. The catalysed reaction is Zn(2+)(in) + H(+)(out) = Zn(2+)(out) + H(+)(in). The enzyme catalyses Cd(2+)(in) + H(+)(out) = Cd(2+)(out) + H(+)(in). It carries out the reaction Fe(2+)(in) + H(+)(out) = Fe(2+)(out) + H(+)(in). Divalent metal cation transporter which exports Zn(2+), Cd(2+) and possibly Fe(2+). May be involved in zinc and iron detoxification by efflux. The polypeptide is Cation-efflux pump FieF (Escherichia coli O127:H6 (strain E2348/69 / EPEC)).